Here is a 123-residue protein sequence, read N- to C-terminus: Proteasome assembly chaperone 4 (123 aa).

It belongs to the PSMG4 family. Interacts with PSMG3. Associates with alpha subunits of the 20S proteasome.

Its function is as follows. Chaperone protein which promotes assembly of the 20S proteasome. This Homo sapiens (Human) protein is Proteasome assembly chaperone 4.